The primary structure comprises 113 residues: Putative membrane protein insertion efficiency factor (113 aa).

It belongs to the UPF0161 family.

It is found in the cell inner membrane. In terms of biological role, could be involved in insertion of integral membrane proteins into the membrane. This chain is Putative membrane protein insertion efficiency factor, found in Campylobacter concisus (strain 13826).